Consider the following 138-residue polypeptide: Small ribosomal subunit protein uS11c (138 aa).

The disordered stretch occupies residues 1 to 24 (MAKAIPRSGSRRSGRIGSRKSTRR). The span at 9-24 (GSRRSGRIGSRKSTRR) shows a compositional bias: basic residues.

It belongs to the universal ribosomal protein uS11 family. Part of the 30S ribosomal subunit.

It is found in the plastid. It localises to the chloroplast. This is Small ribosomal subunit protein uS11c from Panax ginseng (Korean ginseng).